A 418-amino-acid chain; its full sequence is UDP-N-acetylglucosamine 1-carboxyvinyltransferase (418 aa).

22–23 (KN) serves as a coordination point for phosphoenolpyruvate. Arginine 92 provides a ligand contact to UDP-N-acetyl-alpha-D-glucosamine. The active-site Proton donor is cysteine 116. Cysteine 116 is modified (2-(S-cysteinyl)pyruvic acid O-phosphothioketal). UDP-N-acetyl-alpha-D-glucosamine contacts are provided by residues 121–125 (RPVDL), aspartate 305, and isoleucine 327.

Belongs to the EPSP synthase family. MurA subfamily.

It is found in the cytoplasm. The catalysed reaction is phosphoenolpyruvate + UDP-N-acetyl-alpha-D-glucosamine = UDP-N-acetyl-3-O-(1-carboxyvinyl)-alpha-D-glucosamine + phosphate. It participates in cell wall biogenesis; peptidoglycan biosynthesis. Its function is as follows. Cell wall formation. Adds enolpyruvyl to UDP-N-acetylglucosamine. The sequence is that of UDP-N-acetylglucosamine 1-carboxyvinyltransferase from Acidiphilium cryptum (strain JF-5).